Reading from the N-terminus, the 203-residue chain is Orotate phosphoribosyltransferase (203 aa).

5-phospho-alpha-D-ribose 1-diphosphate contacts are provided by residues arginine 94, lysine 98, histidine 100, and 120-128 (EDLISTGGS). An orotate-binding site is contributed by serine 124.

This sequence belongs to the purine/pyrimidine phosphoribosyltransferase family. PyrE subfamily. As to quaternary structure, homodimer. Mg(2+) serves as cofactor.

It carries out the reaction orotidine 5'-phosphate + diphosphate = orotate + 5-phospho-alpha-D-ribose 1-diphosphate. It functions in the pathway pyrimidine metabolism; UMP biosynthesis via de novo pathway; UMP from orotate: step 1/2. Functionally, catalyzes the transfer of a ribosyl phosphate group from 5-phosphoribose 1-diphosphate to orotate, leading to the formation of orotidine monophosphate (OMP). The protein is Orotate phosphoribosyltransferase of Staphylococcus aureus (strain MSSA476).